Reading from the N-terminus, the 819-residue chain is Solute carrier organic anion transporter family member 74D (819 aa).

A disordered region spans residues 1 to 157 (MTKSNGDVEA…GSSAESSSSC (157 aa)). Over 1-174 (MTKSNGDVEA…RWARRFASTH (174 aa)) the chain is Cytoplasmic. Composition is skewed to polar residues over residues 24-34 (GHGQLNGNGYH), 43-62 (SQAFTPLLSQHNNGTTNGEV), and 71-81 (LYESTPSNNNE). 2 stretches are compositionally biased toward low complexity: residues 91 to 111 (LKNGLGNILSSNNNGTGNGHS) and 144 to 157 (DLNGGSSAESSSSC). The chain crosses the membrane as a helical span at residues 175 to 195 (VFMVVFLLAYILQGMYMTYFV). Topologically, residues 196 to 213 (SVITTIEKLFQIKSKTTG) are extracellular. The helical transmembrane segment at 214–234 (ILLSASEMGQICTAMLLTYFA) threads the bilayer. Residues 235–242 (GRGHRPRW) are Cytoplasmic-facing. The helical transmembrane segment at 243 to 263 (IACGMVLFSIAAFSCALPHFI) threads the bilayer. Residues 264–332 (FGEQLMHSSV…LEQASHSKIT (69 aa)) are Extracellular-facing. N-linked (GlcNAc...) asparagine glycosylation is found at Asn-284, Asn-293, and Asn-309. The helical transmembrane segment at 333–353 (VIVLCIFFGSLLSSGIGQTAV) threads the bilayer. Over 354 to 373 (ATLGIPYIDDNVGSKQSPMY) the chain is Cytoplasmic. Residues 374-394 (MAVTIGMRILGPASGFIFGSF) traverse the membrane as a helical segment. Residues 395–413 (CTRWYVNFSNPGFDATDPR) lie on the Extracellular side of the membrane. Asn-401 carries N-linked (GlcNAc...) asparagine glycosylation. A helical transmembrane segment spans residues 414–434 (WIGAWWLGPVAIGSLMLLASI). Residues 435–488 (AMFSFPKQLRGKQKPPGQTATPAAPVEPEEKPKLKDFPKTVRRQLSNDILMFRT) lie on the Cytoplasmic side of the membrane. The interval 444–466 (RGKQKPPGQTATPAAPVEPEEKP) is disordered. Residues 489–509 (ASCVFHLLPIAGLYTFLPKYL) form a helical membrane-spanning segment. Residues 510–522 (ETQFRLATYDANM) are Extracellular-facing. Residues 523–543 (IAAFCGILVMGIGIVISGLFI) form a helical membrane-spanning segment. At 544–553 (LKRKPTARGV) the chain is on the cytoplasmic side. Residues 554-574 (AAWIAFTALVYSAGMIILMFI) traverse the membrane as a helical segment. The Extracellular segment spans residues 575–667 (GCSMNDFAGY…NGYCDNNCKN (93 aa)). Residues 593–651 (ALIEPTCSAALNCTCDKENFAPICADGKMYISACHAGCSSSSLRPSDNRTLYSDCACIP) enclose the Kazal-like domain. 3 disulfide bridges follow: Cys-599-Cys-630, Cys-607-Cys-626, and Cys-616-Cys-649. Asn-604 carries an N-linked (GlcNAc...) asparagine glycan. Asn-640 is a glycosylation site (N-linked (GlcNAc...) asparagine). A helical transmembrane segment spans residues 668 to 688 (FIYFILIFAICVFMHSTSEVG). Residues 689-707 (SMLLVMRCTHPKDKAMAMG) are Cytoplasmic-facing. The chain crosses the membrane as a helical span at residues 708-728 (VIQSAIGLFGNVPCPIIYGAV). The Extracellular portion of the chain corresponds to 729 to 756 (VDSACLIWKSVCGKHGACSLYDADTFRQ). Residues 757–777 (YFLGITAGIMFLAFLMDLVVW) traverse the membrane as a helical segment. Residues 778–819 (RKAHRIDIAPEDPQEGGPASNGRTLEVSESKQPITPAPDTTV) lie on the Cytoplasmic side of the membrane. The disordered stretch occupies residues 787 to 819 (PEDPQEGGPASNGRTLEVSESKQPITPAPDTTV). The span at 807–819 (SKQPITPAPDTTV) shows a compositional bias: polar residues.

This sequence belongs to the organo anion transporter (TC 2.A.60) family.

Its subcellular location is the cell membrane. In terms of biological role, transporter that mediates the cellular uptake of ecdysteroids, including ecdysone, from the hemolymph. The protein is Solute carrier organic anion transporter family member 74D of Drosophila melanogaster (Fruit fly).